Here is a 311-residue protein sequence, read N- to C-terminus: Bifunctional protein FolD (311 aa).

174–176 (GKG) contributes to the NADP(+) binding site.

It belongs to the tetrahydrofolate dehydrogenase/cyclohydrolase family. As to quaternary structure, homodimer.

The enzyme catalyses (6R)-5,10-methylene-5,6,7,8-tetrahydrofolate + NADP(+) = (6R)-5,10-methenyltetrahydrofolate + NADPH. It catalyses the reaction (6R)-5,10-methenyltetrahydrofolate + H2O = (6R)-10-formyltetrahydrofolate + H(+). It functions in the pathway one-carbon metabolism; tetrahydrofolate interconversion. Its function is as follows. Catalyzes the oxidation of 5,10-methylenetetrahydrofolate to 5,10-methenyltetrahydrofolate and then the hydrolysis of 5,10-methenyltetrahydrofolate to 10-formyltetrahydrofolate. In Pyrobaculum arsenaticum (strain DSM 13514 / JCM 11321 / PZ6), this protein is Bifunctional protein FolD.